The sequence spans 37 residues: Large ribosomal subunit protein bL36c (37 aa).

It belongs to the bacterial ribosomal protein bL36 family.

Its subcellular location is the plastid. This Helicosporidium sp. subsp. Simulium jonesii (Green alga) protein is Large ribosomal subunit protein bL36c.